A 162-amino-acid chain; its full sequence is CASP-like protein 1C1 (162 aa).

Residues 1 to 7 lie on the Cytoplasmic side of the membrane; the sequence is MFSAKAR. Residues 8–28 traverse the membrane as a helical segment; the sequence is WIVAVVLRVAAAGAAAVAAVL. Residues 29 to 52 are Extracellular-facing; it reads MAMSHDEVIVYGMEVQAKFRYTPS. The chain crosses the membrane as a helical span at residues 53-73; the sequence is LVFFVAANAAVSACSLVVLLV. Residues 74 to 83 lie on the Cytoplasmic side of the membrane; that stretch reads PSSTSKLAAR. Residues 84–104 form a helical membrane-spanning segment; the sequence is LLLMADVVLGMVLAGAFAAAG. Residues 105-135 lie on the Extracellular side of the membrane; sequence AMAELGKNGNSHAGWIAICVQVPLFCDRVRS. The chain crosses the membrane as a helical span at residues 136–156; sequence ALVAGSATIVLYYLMLMYSIY. The Cytoplasmic segment spans residues 157–162; that stretch reads TLPMFP.

Belongs to the Casparian strip membrane proteins (CASP) family. In terms of assembly, homodimer and heterodimers.

Its subcellular location is the cell membrane. The polypeptide is CASP-like protein 1C1 (Oryza sativa subsp. japonica (Rice)).